Reading from the N-terminus, the 127-residue chain is Aspartate 1-decarboxylase (127 aa).

The active-site Schiff-base intermediate with substrate; via pyruvic acid is the Ser-25. A Pyruvic acid (Ser) modification is found at Ser-25. A substrate-binding site is contributed by Thr-57. Catalysis depends on Tyr-58, which acts as the Proton donor. A substrate-binding site is contributed by Gly-73–Ala-75.

The protein belongs to the PanD family. Heterooctamer of four alpha and four beta subunits. Pyruvate serves as cofactor. In terms of processing, is synthesized initially as an inactive proenzyme, which is activated by self-cleavage at a specific serine bond to produce a beta-subunit with a hydroxyl group at its C-terminus and an alpha-subunit with a pyruvoyl group at its N-terminus.

Its subcellular location is the cytoplasm. It carries out the reaction L-aspartate + H(+) = beta-alanine + CO2. It participates in cofactor biosynthesis; (R)-pantothenate biosynthesis; beta-alanine from L-aspartate: step 1/1. Its function is as follows. Catalyzes the pyruvoyl-dependent decarboxylation of aspartate to produce beta-alanine. The chain is Aspartate 1-decarboxylase from Bacillus subtilis (strain 168).